Consider the following 478-residue polypeptide: Protein nucleotidyltransferase YdiU (478 aa).

Residues Gly83, Gly85, Arg86, Lys106, Asp118, Gly119, Arg169, and Arg176 each contribute to the ATP site. The active-site Proton acceptor is the Asp245. 2 residues coordinate Mg(2+): Asn246 and Asp255. Asp255 is a binding site for ATP.

The protein belongs to the SELO family. Requires Mg(2+) as cofactor. Mn(2+) is required as a cofactor.

The catalysed reaction is L-seryl-[protein] + ATP = 3-O-(5'-adenylyl)-L-seryl-[protein] + diphosphate. It catalyses the reaction L-threonyl-[protein] + ATP = 3-O-(5'-adenylyl)-L-threonyl-[protein] + diphosphate. It carries out the reaction L-tyrosyl-[protein] + ATP = O-(5'-adenylyl)-L-tyrosyl-[protein] + diphosphate. The enzyme catalyses L-histidyl-[protein] + UTP = N(tele)-(5'-uridylyl)-L-histidyl-[protein] + diphosphate. The catalysed reaction is L-seryl-[protein] + UTP = O-(5'-uridylyl)-L-seryl-[protein] + diphosphate. It catalyses the reaction L-tyrosyl-[protein] + UTP = O-(5'-uridylyl)-L-tyrosyl-[protein] + diphosphate. Functionally, nucleotidyltransferase involved in the post-translational modification of proteins. It can catalyze the addition of adenosine monophosphate (AMP) or uridine monophosphate (UMP) to a protein, resulting in modifications known as AMPylation and UMPylation. In Exiguobacterium sp. (strain ATCC BAA-1283 / AT1b), this protein is Protein nucleotidyltransferase YdiU.